A 593-amino-acid chain; its full sequence is tRNA (guanine(26)-N(2))-dimethyltransferase 1 (593 aa).

Residues 9 to 465 form the Trm1 methyltransferase domain; that stretch reads TVIKEGEAEV…APMEIIWDIM (457 aa). Residue Arg36 participates in S-adenosyl-L-methionine binding. The disordered stretch occupies residues 56–118; sequence AMLSKRARSS…KTAYESARRE (63 aa). Composition is skewed to basic and acidic residues over residues 68 to 81 and 88 to 118; these read VVEK…KEET and DNGK…ARRE. Residues Arg134, Asp152, and Val185 each coordinate S-adenosyl-L-methionine. Residues Cys315, Cys318, Cys350, and Cys353 each contribute to the Zn(2+) site. The tract at residues 546–593 is disordered; sequence VNGHLNNNHKEAGDEEEEEEEEEPEEDIIEGEPELKRQKTTEDFASTS. Acidic residues predominate over residues 558 to 577; it reads GDEEEEEEEEEPEEDIIEGE. Residues 578–587 show a composition bias toward basic and acidic residues; sequence PELKRQKTTE.

This sequence belongs to the class I-like SAM-binding methyltransferase superfamily. Trm1 family.

The catalysed reaction is guanosine(26) in tRNA + 2 S-adenosyl-L-methionine = N(2)-dimethylguanosine(26) in tRNA + 2 S-adenosyl-L-homocysteine + 2 H(+). Functionally, dimethylates a single guanine residue at position 26 of most tRNAs using S-adenosyl-L-methionine as donor of the methyl groups. The polypeptide is tRNA (guanine(26)-N(2))-dimethyltransferase 1 (Arabidopsis thaliana (Mouse-ear cress)).